A 105-amino-acid polypeptide reads, in one-letter code: uncharacterized protein (105 aa).

This is an uncharacterized protein from Bacillus subtilis (strain 168).